Here is a 399-residue protein sequence, read N- to C-terminus: Argonaute-binding protein 1 (399 aa).

In terms of assembly, component of the argonaute siRNA chaperone (ARC) complex composed of ago1, arb1 and arb2. Interacts with ago1.

The protein resides in the nucleus. The protein localises to the cytoplasm. In terms of biological role, component of the argonaute siRNA chaperone (ARC) complex which is required for histone H3K9 methylation, heterochromatin assembly and siRNA generation. The ARC complex contains mostly double-stranded siRNA. Inhibits the release of the siRNA passenger strand from ago1 together with arb2. Inhibits the slicer activity of ago1. Required for swi6 localization to the centromeric repeats. The sequence is that of Argonaute-binding protein 1 (arb1) from Schizosaccharomyces pombe (strain 972 / ATCC 24843) (Fission yeast).